Reading from the N-terminus, the 545-residue chain is Chaperonin GroEL 3 (545 aa).

Residues 30–33, K51, 87–91, G415, and D496 contribute to the ATP site; these read TLGP and DGTTT.

It belongs to the chaperonin (HSP60) family. As to quaternary structure, forms a cylinder of 14 subunits composed of two heptameric rings stacked back-to-back. Interacts with the co-chaperonin GroES.

It localises to the cytoplasm. The enzyme catalyses ATP + H2O + a folded polypeptide = ADP + phosphate + an unfolded polypeptide.. In terms of biological role, together with its co-chaperonin GroES, plays an essential role in assisting protein folding. The GroEL-GroES system forms a nano-cage that allows encapsulation of the non-native substrate proteins and provides a physical environment optimized to promote and accelerate protein folding. In Nitrobacter hamburgensis (strain DSM 10229 / NCIMB 13809 / X14), this protein is Chaperonin GroEL 3.